A 308-amino-acid chain; its full sequence is Olfactory receptor 5K1 (308 aa).

Topologically, residues 1–25 (MAEENHTMKNEFILTGFTDHPELKT) are extracellular. N5 is a glycosylation site (N-linked (GlcNAc...) asparagine). Residues 26 to 46 (LLFVVFFAIYLITVVGNISLV) traverse the membrane as a helical segment. Residues 47–54 (ALIFTHRR) lie on the Cytoplasmic side of the membrane. Residues 55–75 (LHTPMYIFLGNLALVDSCCAC) form a helical membrane-spanning segment. Residues 76 to 99 (AITPKMLENFFSENKRISLYECAV) lie on the Extracellular side of the membrane. The cysteines at positions 97 and 189 are disulfide-linked. A helical transmembrane segment spans residues 100–120 (QFYFLCTVETADCFLLAAMAY). Residues 121 to 139 (DRYVAICNPLQYHIMMSKK) are Cytoplasmic-facing. The chain crosses the membrane as a helical span at residues 140–160 (LCIQMTTGAFIAGNLHSMIHV). The Extracellular segment spans residues 161-196 (GLVFRLVFCGSNHINHFYCDILPLYRLSCVDPYINE). The helical transmembrane segment at 197-217 (LVLFIFSGSVQVFTIGSVLIS) threads the bilayer. Residues 218-237 (YLYILLTIFKMKSKEGRAKA) are Cytoplasmic-facing. The helical transmembrane segment at 238-258 (FSTCASHFLSVSLFYGSLFFM) threads the bilayer. The Extracellular portion of the chain corresponds to 259 to 271 (YVRPNLLEEGDKD). A helical transmembrane segment spans residues 272-292 (IPAAILFTIVVPLLNPFIYSL). The Cytoplasmic segment spans residues 293–308 (RNREVISVLRKILMKK).

This sequence belongs to the G-protein coupled receptor 1 family.

Its subcellular location is the cell membrane. In terms of biological role, odorant receptor. The protein is Olfactory receptor 5K1 (OR5K1) of Homo sapiens (Human).